The primary structure comprises 861 residues: Xylan 1,4-beta-xylosidase (861 aa).

An N-terminal signal peptide occupies residues 1 to 19; the sequence is MKYQLFLSLALCVGLGASA. Catalysis depends on Asp-269, which acts as the Nucleophile. The PA14 domain maps to 458 to 600; it reads DGKKGLKGTF…DYQETIAQLK (143 aa). Glu-616 serves as the catalytic Proton donor/acceptor.

Belongs to the glycosyl hydrolase 3 family. Exists as a large polymeric species, presumably as a homononamer.

It carries out the reaction Hydrolysis of (1-&gt;4)-beta-D-xylans, to remove successive D-xylose residues from the non-reducing termini.. It catalyses the reaction Hydrolysis of terminal non-reducing alpha-L-arabinofuranoside residues in alpha-L-arabinosides.. Its pathway is glycan degradation; xylan degradation. Its function is as follows. Involved in degradation of plant cell wall polysaccharides. Has beta-xylosidase activity via its capacity to hydrolyze glycosidic linkages of beta-1,4-xylo-oligosaccharides of various lengths (X2 to X6), releasing xylose monomers. To a much lesser extent, also has alpha-L-arabinofuranosidase activity. Does not possess beta-D-glucosidase activity. Acts synergistically with Xyn10D-Fae1A to increase the release of xylose from xylan. The sequence is that of Xylan 1,4-beta-xylosidase from Xylanibacter ruminicola (strain ATCC 19189 / DSM 19721 / CIP 105475 / JCM 8958 / 23) (Prevotella ruminicola).